The following is a 478-amino-acid chain: Sphingomyelin synthase-related protein 1 (478 aa).

Residues 1–22 show a composition bias toward low complexity; the sequence is MPAGSRAGSRLRSGSLPRPSRL. The interval 1–65 is disordered; it reads MPAGSRAGSR…TAEEVEKEMA (65 aa). Residues 75-141 form the SAM domain; that stretch reads WTTKHVAVWL…MLSVRKLQKI (67 aa). Transmembrane regions (helical) follow at residues 216-236, 264-284, 295-315, 341-361, 385-405, and 410-430; these read ILSCVYVFIVFGFTSFIMVIV, FSMTEVCGVILCYIWILVLLL, LCSLMGTVFLLRCFTMFVTSL, AIWSGFGMTLTGVHTCGDYMF, FLHTLSWVLNLFGIFFILAAH, and IDVFIAFYITTRLFLYYHTLA. Residues 431 to 478 lie on the Cytoplasmic side of the membrane; sequence NTRAYHQSRRARIWFPMFSFFECNVNGTVPNEYCWPFSKPAIMKRLIG.

This sequence belongs to the sphingomyelin synthase family. In terms of tissue distribution, expressed ubiquitously with highest levels in macrophages and testis.

It localises to the endoplasmic reticulum membrane. The catalysed reaction is an N-acylsphing-4-enine + a 1,2-diacyl-sn-glycero-3-phosphoethanolamine = an N-acylsphing-4-enine 1-phosphoethanolamine + a 1,2-diacyl-sn-glycerol. It carries out the reaction an N-acylsphinganine + a 1,2-diacyl-sn-glycero-3-phosphoethanolamine = an N-acylsphinganine-1-phosphoethanolamine + a 1,2-diacyl-sn-glycerol. It catalyses the reaction an N-acyl-(4R)-4-hydroxysphinganine + a 1,2-diacyl-sn-glycero-3-phosphoethanolamine = an N-acyl-(4R)-4-hydroxysphinganine-1-phosphoethanolamine + a 1,2-diacyl-sn-glycerol. The enzyme catalyses N-hexadecanoylsphinganine + a 1,2-diacyl-sn-glycero-3-phosphoethanolamine = N-hexadecanoyl-sphinganine-1-phosphoethanolamine + a 1,2-diacyl-sn-glycerol. The catalysed reaction is N-hexadecanoyl-(4R)-hydroxysphinganine + a 1,2-diacyl-sn-glycero-3-phosphoethanolamine = N-hexadecanoyl-(4R)-hydroxysphinganine-1-phosphoethanolamine + a 1,2-diacyl-sn-glycerol. It participates in sphingolipid metabolism. Its function is as follows. Synthesizes sphingolipids through transfer of a phosphatidyl head group from a glycerophospholipid on to the primary hydroxyl of a ceramide in the lumen of the endoplasmic reticulum. Catalyzes the synthesis of ceramide phosphoethanolamines (CPEs) (such as N-acylsphing-4-enine 1-phosphoethanolamine) by transferring phosphoethanolamine head group, which is smaller and more hydrophilic than the phosphocholine (PC) headgroup transferred in the canonical sphingomyelin synthesis (SMS) reaction by SMS1 or SMS2, from a phosphatidylethanolamine (1,2-diacyl-sn-glycero-3-phosphoethanolamine, PE) to a ceramide (such as N-acylsphing-4-enine). The larger PC prevents an efficient fit in the enzyme's catalytic pocket, leading to little or no SMS activity. In vitro, in the absence of ceramide, it has PLC activity with preference for phosphatidylinositol and phosphatidic acid, but also hydrolyzes phosphatidylethanolamine. The sequence is that of Sphingomyelin synthase-related protein 1 from Mus musculus (Mouse).